The primary structure comprises 380 residues: Succinyl-diaminopimelate desuccinylase (380 aa).

H69 serves as a coordination point for Zn(2+). Residue D71 is part of the active site. A Zn(2+)-binding site is contributed by D102. The active-site Proton acceptor is the E135. E136, E164, and H353 together coordinate Zn(2+).

Belongs to the peptidase M20A family. DapE subfamily. In terms of assembly, homodimer. The cofactor is Zn(2+). Requires Co(2+) as cofactor.

The enzyme catalyses N-succinyl-(2S,6S)-2,6-diaminopimelate + H2O = (2S,6S)-2,6-diaminopimelate + succinate. The protein operates within amino-acid biosynthesis; L-lysine biosynthesis via DAP pathway; LL-2,6-diaminopimelate from (S)-tetrahydrodipicolinate (succinylase route): step 3/3. Its function is as follows. Catalyzes the hydrolysis of N-succinyl-L,L-diaminopimelic acid (SDAP), forming succinate and LL-2,6-diaminopimelate (DAP), an intermediate involved in the bacterial biosynthesis of lysine and meso-diaminopimelic acid, an essential component of bacterial cell walls. The protein is Succinyl-diaminopimelate desuccinylase of Cereibacter sphaeroides (strain ATCC 17029 / ATH 2.4.9) (Rhodobacter sphaeroides).